The sequence spans 201 residues: MEKFTKLTGVAAPMPIVNVDTDMIIPKDYLKTIKRTGLGTGLFAEMRYNDDGSENPDFVLNKPAYRKAQILVAGDNFGCGSSREHAPWALLDFGIRCVISTSFADIFYNNCFKNGVLPITVSPEDLEKLMDDASRGSNATLSVDLEAKEIRGPDGGVVKFDLDDFKRHCMLNGLDDIGLTMEKAGAIASFEKKNAEQRPWA.

It belongs to the LeuD family. LeuD type 1 subfamily. In terms of assembly, heterodimer of LeuC and LeuD.

The catalysed reaction is (2R,3S)-3-isopropylmalate = (2S)-2-isopropylmalate. It participates in amino-acid biosynthesis; L-leucine biosynthesis; L-leucine from 3-methyl-2-oxobutanoate: step 2/4. Catalyzes the isomerization between 2-isopropylmalate and 3-isopropylmalate, via the formation of 2-isopropylmaleate. The polypeptide is 3-isopropylmalate dehydratase small subunit (Mesorhizobium japonicum (strain LMG 29417 / CECT 9101 / MAFF 303099) (Mesorhizobium loti (strain MAFF 303099))).